Consider the following 452-residue polypeptide: Protein henna (452 aa).

Residues 36–107 enclose the ACT domain; that stretch reads FSPKDSSLSS…EQCSYFNIIS (72 aa). A Phosphoserine; by CaMK2 modification is found at Ser272. Residues His284, His289, and Glu329 each coordinate Fe cation.

The protein belongs to the biopterin-dependent aromatic amino acid hydroxylase family. It depends on Fe(2+) as a cofactor. Phenylalanine hydrolase activity is found in yolk granules of embryos, and female abdomen and fat body tissues. Tryptophan hydroxylase is expressed in serotonergic neurons. Both enzymes are present in cuticular tissues.

The catalysed reaction is (6R)-L-erythro-5,6,7,8-tetrahydrobiopterin + L-phenylalanine + O2 = (4aS,6R)-4a-hydroxy-L-erythro-5,6,7,8-tetrahydrobiopterin + L-tyrosine. It catalyses the reaction (6R)-L-erythro-5,6,7,8-tetrahydrobiopterin + L-tryptophan + O2 = 5-hydroxy-L-tryptophan + (4aS,6R)-4a-hydroxy-L-erythro-5,6,7,8-tetrahydrobiopterin. It participates in amino-acid degradation; L-phenylalanine degradation; acetoacetate and fumarate from L-phenylalanine: step 1/6. With respect to regulation, N-terminal region of PAH is thought to contain allosteric binding sites for phenylalanine and to constitute an 'inhibitory' domain that regulates the activity of a catalytic domain in the C-terminal portion of the molecule. This is Protein henna (Hn) from Drosophila melanogaster (Fruit fly).